A 222-amino-acid polypeptide reads, in one-letter code: Cytochrome b6 (222 aa).

The chain crosses the membrane as a helical span at residues 39–59; sequence IFYCLGGITLVCFLVQFATGF. C42 lines the heme c pocket. Residues H93 and H107 each contribute to the heme b site. Helical transmembrane passes span 97 to 117, 123 to 143, and 193 to 213; these read ASMMVLMMILHVFRVYLTGGF, LTWMTGVILAVITVSFGVTGY, and LHTFVFPWLIAVFMLAHFLMI. The heme b site is built by H194 and H209.

The protein belongs to the cytochrome b family. PetB subfamily. In terms of assembly, the 4 large subunits of the cytochrome b6-f complex are cytochrome b6, subunit IV (17 kDa polypeptide, PetD), cytochrome f and the Rieske protein, while the 4 small subunits are PetG, PetL, PetM and PetN. The complex functions as a dimer. Heme b is required as a cofactor. Requires heme c as cofactor.

It is found in the cellular thylakoid membrane. Functionally, component of the cytochrome b6-f complex, which mediates electron transfer between photosystem II (PSII) and photosystem I (PSI), cyclic electron flow around PSI, and state transitions. The polypeptide is Cytochrome b6 (Crocosphaera subtropica (strain ATCC 51142 / BH68) (Cyanothece sp. (strain ATCC 51142))).